A 253-amino-acid polypeptide reads, in one-letter code: DNA repair protein RecO (253 aa).

This sequence belongs to the RecO family.

Its function is as follows. Involved in DNA repair and RecF pathway recombination. The polypeptide is DNA repair protein RecO (Dehalococcoides mccartyi (strain CBDB1)).